Consider the following 910-residue polypeptide: Protein translocase subunit SecA (910 aa).

Residues Gln-87, 105 to 109 (GEGKT), and Asp-512 contribute to the ATP site. Composition is skewed to basic and acidic residues over residues 561-571 (RHESRRIDNQL), 841-853 (EEERRQQAEELAR), and 880-890 (TFEREARKVGR). Disordered regions lie at residues 561–584 (RHESRRIDNQLRGRSGRQGDAGSS) and 835–910 (EEVD…GKIN). Residues Cys-894, Cys-896, Cys-905, and His-906 each coordinate Zn(2+). The segment covering 900 to 910 (KKYKQCHGKIN) has biased composition (basic residues).

Belongs to the SecA family. In terms of assembly, monomer and homodimer. Part of the essential Sec protein translocation apparatus which comprises SecA, SecYEG and auxiliary proteins SecDF-YajC and YidC. Requires Zn(2+) as cofactor.

The protein localises to the cell inner membrane. It is found in the cytoplasm. The enzyme catalyses ATP + H2O + cellular proteinSide 1 = ADP + phosphate + cellular proteinSide 2.. Functionally, part of the Sec protein translocase complex. Interacts with the SecYEG preprotein conducting channel. Has a central role in coupling the hydrolysis of ATP to the transfer of proteins into and across the cell membrane, serving both as a receptor for the preprotein-SecB complex and as an ATP-driven molecular motor driving the stepwise translocation of polypeptide chains across the membrane. In Photobacterium profundum (strain SS9), this protein is Protein translocase subunit SecA.